The primary structure comprises 149 residues: Large ribosomal subunit protein bL9 (149 aa).

It belongs to the bacterial ribosomal protein bL9 family.

In terms of biological role, binds to the 23S rRNA. This Haemophilus ducreyi (strain 35000HP / ATCC 700724) protein is Large ribosomal subunit protein bL9.